We begin with the raw amino-acid sequence, 535 residues long: BAR/IMD domain-containing adapter protein 2 (535 aa).

Positions 1–250 (MSLSRSEEMH…VQLMQQMANS (250 aa)) constitute an IMD domain. Residues 88-153 (NQLEETLKSF…LRKKSQGSKN (66 aa)) are a coiled coil. Residues S262, S324, S326, and S337 each carry the phosphoserine modification. The disordered stretch occupies residues 299–370 (VMNGVAGPDS…TLPRSSSMAA (72 aa)). Residues 321–335 (QPKSLSPPQSQSKLS) are compositionally biased toward low complexity. Residue T341 is modified to Phosphothreonine. A Phosphoserine modification is found at S347. Over residues 349 to 368 (TPKNSYATTENKTLPRSSSM) the composition is skewed to polar residues. T361 carries the post-translational modification Phosphothreonine. S367, S385, S396, and S455 each carry phosphoserine. The region spanning 375–438 (NGRMRVKAIF…PFSYTRVLDS (64 aa)) is the SH3 domain. The disordered stretch occupies residues 445–477 (HMSLQQGKSSSTGNLLDKDDLALPPPDYGTSSR). Residues 447 to 458 (SLQQGKSSSTGN) show a composition bias toward polar residues.

Homodimer. Interacts with CDC42 and RAC1 that have been activated by GTP binding. Binds DIAPH1. Interacts with ATN1, ADGRB1, SHANK1, SHANK2, SHANK3, TIAM1, WASF1 and WASF2. Interacts with ENAH after recruitment of CDC42. Interacts with EPS8. Phosphorylated on tyrosine residues by INSR in response to insulin treatment. In terms of tissue distribution, detected in liver, brain, olfactory bulb, brain cortex, caudate putamen, hypothalamus and cerebellum.

It is found in the cytoplasm. The protein resides in the membrane. Its subcellular location is the cell projection. The protein localises to the filopodium. It localises to the ruffle. It is found in the cytoskeleton. Its function is as follows. Adapter protein that links membrane-bound small G-proteins to cytoplasmic effector proteins. Necessary for CDC42-mediated reorganization of the actin cytoskeleton and for RAC1-mediated membrane ruffling. Involved in the regulation of the actin cytoskeleton by WASF family members and the Arp2/3 complex. Plays a role in neurite growth. Acts syngeristically with ENAH to promote filipodia formation. Plays a role in the reorganization of the actin cytoskeleton in response to bacterial infection. Participates in actin bundling when associated with EPS8, promoting filopodial protrusions. This chain is BAR/IMD domain-containing adapter protein 2 (Baiap2), found in Mus musculus (Mouse).